Consider the following 262-residue polypeptide: Sperm microtubule inner protein 6 (262 aa).

Belongs to the SPMIP6 family. In terms of assembly, microtubule inner protein component of sperm flagellar doublet microtubules. Interacts with alpha-tubulin.

It localises to the cytoplasm. The protein localises to the cytoskeleton. Its subcellular location is the nucleus. The protein resides in the mitochondrion. It is found in the flagellum axoneme. Its function is as follows. May participate in intramanchette transport and midpiece formation of the sperm tail. May play a potential role in somatic cell proliferation. The sequence is that of Sperm microtubule inner protein 6 (SPMIP6) from Macaca fascicularis (Crab-eating macaque).